The sequence spans 166 residues: UPF0254 protein Mevan_0254 (166 aa).

This sequence belongs to the UPF0254 family.

The protein is UPF0254 protein Mevan_0254 of Methanococcus vannielii (strain ATCC 35089 / DSM 1224 / JCM 13029 / OCM 148 / SB).